A 213-amino-acid chain; its full sequence is Peptidyl-tRNA hydrolase (213 aa).

Tyr26 contacts tRNA. His31 (proton acceptor) is an active-site residue. TRNA contacts are provided by Tyr78, Asn80, and Asn126.

This sequence belongs to the PTH family. In terms of assembly, monomer.

The protein localises to the cytoplasm. It carries out the reaction an N-acyl-L-alpha-aminoacyl-tRNA + H2O = an N-acyl-L-amino acid + a tRNA + H(+). In terms of biological role, hydrolyzes ribosome-free peptidyl-tRNAs (with 1 or more amino acids incorporated), which drop off the ribosome during protein synthesis, or as a result of ribosome stalling. Its function is as follows. Catalyzes the release of premature peptidyl moieties from peptidyl-tRNA molecules trapped in stalled 50S ribosomal subunits, and thus maintains levels of free tRNAs and 50S ribosomes. The chain is Peptidyl-tRNA hydrolase from Trichormus variabilis (strain ATCC 29413 / PCC 7937) (Anabaena variabilis).